The primary structure comprises 356 residues: tRNA N6-adenosine threonylcarbamoyltransferase (356 aa).

The Fe cation site is built by histidine 115 and histidine 119. Substrate is bound by residues 138–142 (LVSGG), aspartate 171, glycine 184, and asparagine 283. Aspartate 311 provides a ligand contact to Fe cation.

The protein belongs to the KAE1 / TsaD family. Fe(2+) is required as a cofactor.

The protein localises to the cytoplasm. The catalysed reaction is L-threonylcarbamoyladenylate + adenosine(37) in tRNA = N(6)-L-threonylcarbamoyladenosine(37) in tRNA + AMP + H(+). Required for the formation of a threonylcarbamoyl group on adenosine at position 37 (t(6)A37) in tRNAs that read codons beginning with adenine. Is involved in the transfer of the threonylcarbamoyl moiety of threonylcarbamoyl-AMP (TC-AMP) to the N6 group of A37, together with TsaE and TsaB. TsaD likely plays a direct catalytic role in this reaction. The polypeptide is tRNA N6-adenosine threonylcarbamoyltransferase (Prochlorococcus marinus (strain MIT 9312)).